A 545-amino-acid polypeptide reads, in one-letter code: Tripartite motif-containing 55 (545 aa).

The segment at 26–82 (CPICLEMFTKPVVILPCQHNLCRKCASDIFQASNPYLPTRGGTTVASGGRFRCPSCR) adopts an RING-type zinc-finger fold. The B box-type zinc-finger motif lies at 119–161 (LDQPMCEEHEEERINIYCLNCEVPTCSLCKVFGAHKDCQVAPL). 4 residues coordinate Zn(2+): cysteine 124, histidine 127, cysteine 147, and histidine 153. In terms of domain architecture, COS spans 269-327 (MDEPEMAVFLQNAKTLLQKIVEASKAFQMEKLEQGYEIMSNFTVNLNREEKIIREIDFS). Disordered stretches follow at residues 324–352 (IDFS…VEVE), 359–378 (IASS…SQLP), and 417–532 (SQQT…EPAR). A compositionally biased stretch (acidic residues) spans 328–352 (REEEEEEDAGEIDEEGEGEDAVEVE). The segment covering 417-428 (SQQTTQSETSGP) has biased composition (polar residues). Residues 474–485 (SSVQSAEVAEAA) are compositionally biased toward low complexity. Polar residues predominate over residues 486–506 (TNEQAAVSGKESSSTAATSQI).

In terms of processing, targeted for degradation through the proteasomal and lysosomal pathways in the presence of SUMO3. As to expression, widely expressed in various tissues, besides skeletal muscle and heart, such as brain, lung, liver, spleen and kidney.

The protein resides in the nucleus. The protein localises to the cytoplasm. The catalysed reaction is S-ubiquitinyl-[E2 ubiquitin-conjugating enzyme]-L-cysteine + [acceptor protein]-L-lysine = [E2 ubiquitin-conjugating enzyme]-L-cysteine + N(6)-ubiquitinyl-[acceptor protein]-L-lysine.. Functionally, E3 ubiquitin ligase that plays an important role in regulating cardiac development and contractility, muscle growth, metabolism, and fiber-type differentiation. Acts as a critical factor that regulates cardiomyocyte size during development in concert with TRIM63 by regulating E2F1-mediated gene expression. Plays a role in apoptosis induction in cardiomyocytes by promoting ubiquitination of the DUSP1 phosphatase. Promotes non-canonical NF-kappa-B signaling and B-cell-mediated immune responses by mediating NFKB2 'Lys-48'-linked ubiquitination and processing. In turn, NFKB2 is further processed by valosin-containing protein/VCP, an ATPase that mediates ubiquitin-dependent protein degradation by the proteasome. May play a role in preventing macrophages from producing inflammatory factors and migrating by downregulating the level of nuclear NF-kappa-B subunit RELA. Modifies also PPARG via polyubiquitination and accelerates PPARG proteasomal degradation to inhibit its activity. The chain is Tripartite motif-containing 55 (Trim55) from Mus musculus (Mouse).